A 209-amino-acid chain; its full sequence is N-(5'-phosphoribosyl)anthranilate isomerase (209 aa).

It belongs to the TrpF family.

The catalysed reaction is N-(5-phospho-beta-D-ribosyl)anthranilate = 1-(2-carboxyphenylamino)-1-deoxy-D-ribulose 5-phosphate. The protein operates within amino-acid biosynthesis; L-tryptophan biosynthesis; L-tryptophan from chorismate: step 3/5. The polypeptide is N-(5'-phosphoribosyl)anthranilate isomerase (Staphylococcus carnosus (strain TM300)).